We begin with the raw amino-acid sequence, 180 residues long: Acireductone dioxygenase 1 (180 aa).

Residues His82, His84, Glu88, and His127 each contribute to the Fe(2+) site. Ni(2+) contacts are provided by His82, His84, Glu88, and His127.

This sequence belongs to the acireductone dioxygenase (ARD) family. Fe(2+) is required as a cofactor. Ni(2+) serves as cofactor.

It is found in the cytoplasm. The protein localises to the nucleus. The enzyme catalyses 1,2-dihydroxy-5-(methylsulfanyl)pent-1-en-3-one + O2 = 4-methylsulfanyl-2-oxobutanoate + formate + 2 H(+). It carries out the reaction 1,2-dihydroxy-5-(methylsulfanyl)pent-1-en-3-one + O2 = 3-(methylsulfanyl)propanoate + CO + formate + 2 H(+). It functions in the pathway amino-acid biosynthesis; L-methionine biosynthesis via salvage pathway; L-methionine from S-methyl-5-thio-alpha-D-ribose 1-phosphate: step 5/6. Catalyzes 2 different reactions between oxygen and the acireductone 1,2-dihydroxy-3-keto-5-methylthiopentene (DHK-MTPene) depending upon the metal bound in the active site. Fe-containing acireductone dioxygenase (Fe-ARD) produces formate and 2-keto-4-methylthiobutyrate (KMTB), the alpha-ketoacid precursor of methionine in the methionine recycle pathway. Ni-containing acireductone dioxygenase (Ni-ARD) produces methylthiopropionate, carbon monoxide and formate, and does not lie on the methionine recycle pathway. This chain is Acireductone dioxygenase 1, found in Sorghum bicolor (Sorghum).